Here is a 374-residue protein sequence, read N- to C-terminus: MSLTGYFAAPLCSIFLFILAHADAGQQEDSLYMWIDAHQARVLIGFEEDILIVAEGKMAPFTHDFRKAQQRMPAIPVNIHAMNFTWQATGQAEYFYEFLSLRSLDKGIMADPTVNMPLLGTVPHKATVIQVGFPCLGNQDGVAAFEVNVIVMNSEGNVILQTPQNAIFFKTCQQAKCTGGCRNGGFCNDRHVCECPDGFYGPHCEKALCMPRCMNGGLCVTPGLCICPPGYYGINCDKVNCTTHCLNGGTCFYPGKCICPSGYEGEQCETSKCQQPCRNGGKCSGKNKCKCSKGYQGDLCSKPVCEPSCGAHGTCIEPNKCQCKEGWNGRYCNKKYGSNLMNALRPTGSRNRQHTPSPKRTEDRQALPESNYIW.

Residues 1–28 (MSLTGYFAAPLCSIFLFILAHADAGQQE) form the signal peptide. Residues 33–172 (MWIDAHQARV…PQNAIFFKTC (140 aa)) enclose the WIF domain. A glycan (N-linked (GlcNAc...) asparagine) is linked at asparagine 83. Intrachain disulfides connect cysteine 135–cysteine 172, cysteine 177–cysteine 187, cysteine 181–cysteine 193, cysteine 195–cysteine 204, cysteine 209–cysteine 219, cysteine 213–cysteine 225, and cysteine 227–cysteine 236. EGF-like domains follow at residues 173–205 (QQAK…PHCE), 208–237 (LCMP…INCD), 237–269 (DKVN…EQCE), 270–301 (TSKC…DLCS), and 302–333 (KPVC…RYCN). N-linked (GlcNAc...) asparagine glycosylation is present at asparagine 240. Cystine bridges form between cysteine 241-cysteine 251, cysteine 245-cysteine 257, cysteine 259-cysteine 268, cysteine 273-cysteine 283, cysteine 277-cysteine 289, cysteine 291-cysteine 300, cysteine 305-cysteine 315, cysteine 309-cysteine 321, and cysteine 323-cysteine 332. The disordered stretch occupies residues 343-374 (ALRPTGSRNRQHTPSPKRTEDRQALPESNYIW). The span at 348 to 358 (GSRNRQHTPSP) shows a compositional bias: polar residues.

During somatogenesis, expressed predominantly in unsegmented paraxial presomitic mesoderm and, to a much lesser extent, in newly segmented somites.

Its subcellular location is the secreted. Its function is as follows. Binds to WNT proteins and inhibits their activities. May be involved in mesoderm segmentation. The chain is Wnt inhibitory factor 1 (wif1) from Xenopus laevis (African clawed frog).